A 240-amino-acid polypeptide reads, in one-letter code: MFLKGYTSNVVLIILTFFILLTKEEKNIKNNISGYCFLNFGLKKNAIIKKREKQNLKLFCYNGIRIGQGYDIHKIKVLDEEYNTYANNDFNKNEQSFKTLTLGGVKINNVLVLSHSDGDIIYHSIVDSILGALGSLDIGTLFPDKDEKNKNKNSAIFLRYARLLIYKKNYDIGNVDINVIAQVPKISNIRKNIIKNISTVLNIDESQISVKGKTHEKLGVIGEKKAIECFANILLIPKNS.

Residues D71 and H73 each coordinate a divalent metal cation. Residues 71-73 and 115-116 each bind 4-CDP-2-C-methyl-D-erythritol 2-phosphate; these read DIH and HS. Position 123 (H123) interacts with a divalent metal cation. 4-CDP-2-C-methyl-D-erythritol 2-phosphate contacts are provided by residues 137 to 139, 142 to 146, 181 to 187, and 212 to 214; these read DIG, FPDKD, AQVPKIS, and GKT.

It belongs to the IspF family. Homotrimer. A divalent metal cation serves as cofactor.

It localises to the plastid. It is found in the apicoplast. It catalyses the reaction 4-CDP-2-C-methyl-D-erythritol 2-phosphate = 2-C-methyl-D-erythritol 2,4-cyclic diphosphate + CMP. It functions in the pathway isoprenoid biosynthesis; isopentenyl diphosphate biosynthesis via DXP pathway; isopentenyl diphosphate from 1-deoxy-D-xylulose 5-phosphate: step 4/6. In terms of biological role, in the mevalonate-independent isoprenoid biosynthetic pathway, converts 4-diphosphocytidyl-2C-methyl-D-erythritol 2-phosphate into 2C-methyl-D-erythritol 2,4-cyclodiphosphate and CMP. This is 2-C-methyl-D-erythritol 2,4-cyclodiphosphate synthase, apicoplast from Plasmodium falciparum (isolate 3D7).